We begin with the raw amino-acid sequence, 137 residues long: Fluoride-specific ion channel FluC 4 (137 aa).

The next 4 membrane-spanning stretches (helical) occupy residues 20 to 40 (AAIG…ILGA), 43 to 63 (LWGT…FATL), 83 to 103 (GLCG…LLVL), and 110 to 130 (ALAY…LGLI). Na(+)-binding residues include Gly-86 and Thr-89.

This sequence belongs to the fluoride channel Fluc/FEX (TC 1.A.43) family.

The protein localises to the cell inner membrane. It catalyses the reaction fluoride(in) = fluoride(out). With respect to regulation, na(+) is not transported, but it plays an essential structural role and its presence is essential for fluoride channel function. In terms of biological role, fluoride-specific ion channel. Important for reducing fluoride concentration in the cell, thus reducing its toxicity. The chain is Fluoride-specific ion channel FluC 4 from Brucella suis biovar 1 (strain 1330).